The following is a 340-amino-acid chain: MSSAVVHGDDLDMEPTLQSVLNQNTLRWIFVGGKGGVGKTTTSCSLAIQLAKVRKSVLLISTDPAHNLSDAFGQKFGKEARLIDGYSNLSAMEIDPNGSIQDLLATGDGQGEDPMAGLGMGNMMQDLAFSIPGVDEAMSFAEVLKQVKSLSYEVIVFDTAPTGHTLRFLQFPTVLEKALAKLSQLSTQFGPMLNSILGARGGLPGGQNMDELLQKMESLRETISEVNTQFKNPDMTTFVCVCIAEFLSLYETERMIQELTSYNIDTHSIVVNQLLFPKEGSDCEQCTARRKMQKKYLDQIEELYEDFNVVRMPMLVEEVRGKEKLEKFSEMLVTPYVPPQ.

34-41 (KGGVGKTT) contributes to the ATP binding site. D63 is an active-site residue. E245 and N272 together coordinate ATP. Residues C283 and C286 each coordinate Zn(2+).

It belongs to the arsA ATPase family. In terms of assembly, homodimer.

The protein localises to the cytoplasm. The protein resides in the endoplasmic reticulum. In terms of biological role, ATPase required for the post-translational delivery of tail-anchored (TA) proteins to the endoplasmic reticulum. Recognizes and selectively binds the transmembrane domain of TA proteins in the cytosol. This complex then targets to the endoplasmic reticulum by membrane-bound receptors, where the tail-anchored protein is released for insertion. This process is regulated by ATP binding and hydrolysis. ATP binding drives the homodimer towards the closed dimer state, facilitating recognition of newly synthesized TA membrane proteins. ATP hydrolysis is required for insertion. Subsequently, the homodimer reverts towards the open dimer state, lowering its affinity for the membrane-bound receptor, and returning it to the cytosol to initiate a new round of targeting. The protein is ATPase get3 (get3) of Penicillium rubens (strain ATCC 28089 / DSM 1075 / NRRL 1951 / Wisconsin 54-1255) (Penicillium chrysogenum).